The sequence spans 428 residues: Flotillin-2 (428 aa).

3 S-palmitoyl cysteine lipidation sites follow: cysteine 4, cysteine 19, and cysteine 20.

The protein belongs to the band 7/mec-2 family. Flotillin subfamily. In terms of assembly, heterooligomeric complex of flotillins 1 and 2. In terms of processing, palmitoylation may be required for the formation of higher order complexes and for neurite outgrowth in cultured neural stem cells. In terms of tissue distribution, normally expressed in growing retinal exons of newly differentiated ganglion cells at the retinal margin. After optic nerve injury, expressed in all retinal ganglion cells and retinal axons. Also expressed in endothelial cells, spinal cord, larval and adult skin, muscle processes, thymus and gill macrophages.

It localises to the membrane. The protein localises to the endosome. Functionally, may play a role in axon growth and regeneration. May be involved in epidermal cell adhesion and epidermal structure and function. The polypeptide is Flotillin-2 (flot2) (Carassius auratus (Goldfish)).